A 234-amino-acid polypeptide reads, in one-letter code: Sugar fermentation stimulation protein A (234 aa).

A DNA-binding region (H-T-H motif) is located at residues 201-220 (LLSEAQNKGVEVLAYKAELS).

Belongs to the SfsA family.

Functionally, binds to DNA non-specifically. Could be a regulatory factor involved in maltose metabolism. The chain is Sugar fermentation stimulation protein A from Salmonella agona (strain SL483).